Here is a 190-residue protein sequence, read N- to C-terminus: U1 small nuclear ribonucleoprotein C-1 (190 aa).

A Matrin-type zinc finger spans residues 4-36; it reads YYCDYCDVFLVSESPSVRKAHNSGRNHLTNVRD. Residues 57 to 190 form a disordered region; sequence FETGGGNSTS…PDRARQLGLI (134 aa). Residues 72 to 82 are compositionally biased toward pro residues; sequence GNPPGSQPGPP. Over residues 109-124 the composition is skewed to low complexity; it reads AMLALMNGQNGMSSPG. Residues 125–141 show a composition bias toward pro residues; the sequence is SGPPPMRFAGPPIPNNM. A compositionally biased stretch (basic and acidic residues) spans 180–190; the sequence is NPDRARQLGLI.

Belongs to the U1 small nuclear ribonucleoprotein C family. In terms of assembly, U1 snRNP is composed of the 7 core Sm proteins B/B', D1, D2, D3, E, F and G that assemble in a heptameric protein ring on the Sm site of the small nuclear RNA to form the core snRNP, and at least 3 U1 snRNP-specific proteins U1-70K, U1-A and U1-C. U1-C interacts with U1 snRNA and the 5' splice-site region of the pre-mRNA.

Its subcellular location is the nucleus. Component of the spliceosomal U1 snRNP, which is essential for recognition of the pre-mRNA 5' splice-site and the subsequent assembly of the spliceosome. U1-C is directly involved in initial 5' splice-site recognition for both constitutive and regulated alternative splicing. The interaction with the 5' splice-site seems to precede base-pairing between the pre-mRNA and the U1 snRNA. Stimulates commitment or early (E) complex formation by stabilizing the base pairing of the 5' end of the U1 snRNA and the 5' splice-site region. The chain is U1 small nuclear ribonucleoprotein C-1 from Puccinia graminis f. sp. tritici (strain CRL 75-36-700-3 / race SCCL) (Black stem rust fungus).